The primary structure comprises 721 residues: Phosphomethylpyrimidine synthase (721 aa).

Substrate is bound by residues Asn256, Met285, Tyr314, His350, 370-372 (SRG), 411-414 (DGMR), and Glu450. Position 454 (His454) interacts with Zn(2+). Tyr477 is a binding site for substrate. His518 is a Zn(2+) binding site. Cys598, Cys601, and Cys606 together coordinate [4Fe-4S] cluster.

The protein belongs to the ThiC family. In terms of assembly, homodimer. Requires [4Fe-4S] cluster as cofactor.

The catalysed reaction is 5-amino-1-(5-phospho-beta-D-ribosyl)imidazole + S-adenosyl-L-methionine = 4-amino-2-methyl-5-(phosphooxymethyl)pyrimidine + CO + 5'-deoxyadenosine + formate + L-methionine + 3 H(+). The protein operates within cofactor biosynthesis; thiamine diphosphate biosynthesis. Functionally, catalyzes the synthesis of the hydroxymethylpyrimidine phosphate (HMP-P) moiety of thiamine from aminoimidazole ribotide (AIR) in a radical S-adenosyl-L-methionine (SAM)-dependent reaction. This Shewanella oneidensis (strain ATCC 700550 / JCM 31522 / CIP 106686 / LMG 19005 / NCIMB 14063 / MR-1) protein is Phosphomethylpyrimidine synthase.